The primary structure comprises 574 residues: MKRTHTCGELTINNIDQEVILQGWVKKIRKLGAMVFIDLKDRYGITQLVVDQQHIDLINNVKNEYVIEIKGNVVKRKSINKELVTGDIEVIVKELFIINKSELTPFVLENDVNVNEDTRLTYRYLDLRRPVMQNNLIIRAKINHIIRNFLTDSNFLEVETPYFAKSTPEGARDFLVPSRLNKNKFYALPQSPQLFKQLLMISGIDRYYQIVRCFRDEDLRIDRQPEFTQLDLEMSFATSEDVMQISESLIKKILKEVKNFEIKEPLLRLSYKDAIDLYGSDKPDLRYDLKIHTLNDIFKNTNIKFLNNPDLFIRAICIDQLLSKKQLEDLNQQAKQFHFNSIAFIKFENNNWSGSLASQLTENEKELLIKEFDIKNKATIVLNIGKYEQISQLMGAIRISLAKMFNLETKDDFKLLWVVDFPLFEFSEQENRYVAAHHPFTSPKEECLTDFDTNKKDALTCAYDLVMNGFEIGGGSQRITNPEIQQRMFDAVELTTQQVETNFGWFMNAYKYGAPYHAGIAWGLDRISMIVTDSNSIRDVIAFPKNSLGIDMMSNAPDLVSEKQLEELNIKIVK.

Glu-169 provides a ligand contact to L-aspartate. Residues 193–196 (QLFK) are aspartate. Arg-215 lines the L-aspartate pocket. ATP-binding positions include 215–217 (RDE) and Gln-224. His-437 provides a ligand contact to L-aspartate. Position 471 (Glu-471) interacts with ATP. Position 478 (Arg-478) interacts with L-aspartate. 523-526 (GLDR) lines the ATP pocket.

The protein belongs to the class-II aminoacyl-tRNA synthetase family. Type 1 subfamily. As to quaternary structure, homodimer.

It is found in the cytoplasm. It carries out the reaction tRNA(Asp) + L-aspartate + ATP = L-aspartyl-tRNA(Asp) + AMP + diphosphate. Its function is as follows. Catalyzes the attachment of L-aspartate to tRNA(Asp) in a two-step reaction: L-aspartate is first activated by ATP to form Asp-AMP and then transferred to the acceptor end of tRNA(Asp). The sequence is that of Aspartate--tRNA ligase from Mycoplasma mycoides subsp. mycoides SC (strain CCUG 32753 / NCTC 10114 / PG1).